The following is a 93-amino-acid chain: Protein VNG_0358C (93 aa).

This chain is Protein VNG_0358C, found in Halobacterium salinarum (strain ATCC 700922 / JCM 11081 / NRC-1) (Halobacterium halobium).